Here is a 382-residue protein sequence, read N- to C-terminus: Mating-type protein a-1 (382 aa).

The HMG box DNA-binding region spans 116–184 (IPRPPNAYIL…RLLLENPDYR (69 aa)).

As to quaternary structure, binds in vitro to DNA containing a specific core sequence 5'-CTTTG-3'.

The protein localises to the nucleus. Mating type proteins are sequence specific DNA-binding proteins that act as master switches in yeast differentiation by controlling gene expression in a cell type-specific fashion. Transcriptional activator that induces the transcription of a-specific genes like mating factor mfa-1. Required for mating as an a-cell, blocking of heterokaryon formation (vegetative incompatibility) and for perithecium induction. The polypeptide is Mating-type protein a-1 (mta-1) (Neurospora crassa).